The following is a 249-amino-acid chain: uncharacterized protein (249 aa).

A signal peptide spans 1 to 25; sequence MRYLNTKNIIAAGVLLSCMSSIAWG.

The protein belongs to the periplasmic pilus chaperone family.

The protein localises to the periplasm. Functionally, could be required for the biogenesis of a putative fimbria. This is an uncharacterized protein from Escherichia coli (strain K12).